A 339-amino-acid chain; its full sequence is Photosystem II assembly lipoprotein Ycf48 (339 aa).

The N-terminal stretch at 1–23 (MNRLIKFSFNLILIFVLGLGLSG) is a signal peptide. Residue cysteine 24 is the site of N-palmitoyl cysteine attachment. The S-diacylglycerol cysteine moiety is linked to residue cysteine 24.

This sequence belongs to the Ycf48 family. Part of early PSII assembly complexes which includes D1 (psbA) and PsbI; not found in mature PSII. Binds to the lumenal side of PSII complexes. Interacts with YidC.

The protein resides in the cellular thylakoid membrane. Functionally, a factor required for optimal assembly of photosystem II (PSII), acting in the early stages of PSII assembly. Also plays a role in replacement of photodamaged D1 (psbA). Assists YidC in synthesis of chlorophyll-binding proteins. In Prochlorococcus marinus (strain SARG / CCMP1375 / SS120), this protein is Photosystem II assembly lipoprotein Ycf48.